A 207-amino-acid chain; its full sequence is Uracil phosphoribosyltransferase (207 aa).

Residues arginine 77, arginine 102, and 129–137 (DPMVATGGS) contribute to the 5-phospho-alpha-D-ribose 1-diphosphate site. Residues isoleucine 192 and 197-199 (GDA) each bind uracil. Aspartate 198 serves as a coordination point for 5-phospho-alpha-D-ribose 1-diphosphate.

It belongs to the UPRTase family. Requires Mg(2+) as cofactor.

The enzyme catalyses UMP + diphosphate = 5-phospho-alpha-D-ribose 1-diphosphate + uracil. It participates in pyrimidine metabolism; UMP biosynthesis via salvage pathway; UMP from uracil: step 1/1. Allosterically activated by GTP. Functionally, catalyzes the conversion of uracil and 5-phospho-alpha-D-ribose 1-diphosphate (PRPP) to UMP and diphosphate. In Mycobacterium bovis (strain ATCC BAA-935 / AF2122/97), this protein is Uracil phosphoribosyltransferase.